The chain runs to 467 residues: MAPLMPVAVFGLEVPPGEILIPAASEFPAIIHITMAALDPTKAPEADGQGNIPALPRSTLKIIKATGHDHDDDDEEEDEYLQSLLGGGDSDDEANGGPSDPSKSKKAKQEAAIKKLMAATQEESDEEMEDAKPNGKKGKGKGKASESDEEESDEESDCCGDDDLQLEDYVVCTLDTERNYQQPINITIGEGEKVFFCVQGTHSVYLTGNFVVPEDDEEDSEDDEDESDDEDYDFPLGGEDDDSDDMSDELDELDGTPRVKEITSEDEEEEAPKLVDTSKKGKKRPAEDDAEGLDAMISKDDKKLSKKQQKKQKVEEAKKEEPKKETKSDKKVQFAKNLEQGPTGPAKDKLENKKPTSTVKVVQGVTIDDRKVGTGRAAKNGDRVGMRYIGKLQNGKVFDSNKKGAPFSFKLGKGEVIKGWDIGVAGMAVGGERRLTIPAHLAYGSRALPGIPPNSTLIFDVKLLEIK.

2 disordered regions span residues K64–D163 and G208–S357. 3 stretches are compositionally biased toward acidic residues: residues D71–Y80, S147–D163, and P213–D254. Basic and acidic residues-rich tracts occupy residues A271–E287 and Q312–V332. Positions G381–K467 constitute a PPIase FKBP-type domain.

The protein belongs to the FKBP-type PPIase family. FKBP3/4 subfamily. Binds to histones H3 and H4.

The protein localises to the nucleus. The enzyme catalyses [protein]-peptidylproline (omega=180) = [protein]-peptidylproline (omega=0). Inhibited by both FK506 and rapamycin. In terms of biological role, PPIase that acts as a histone chaperone. Histone proline isomerase that increases the rate of cis-trans isomerization at prolines on the histone H3 N-terminal tail. Proline isomerization influences H3 methylation thereby regulating gene expression. The chain is FK506-binding protein 4 (fkr-4) from Neurospora crassa (strain ATCC 24698 / 74-OR23-1A / CBS 708.71 / DSM 1257 / FGSC 987).